A 560-amino-acid chain; its full sequence is Membrane protein insertase YidC (560 aa).

Residues 1-21 form a helical membrane-spanning segment; sequence MDIKRTILIAALAVVSYVMVL. Residues 42–66 are disordered; that stretch reads VAPGLPDGVPAGNNGASADVPSANA. Helical transmembrane passes span 341–361, 367–387, 437–457, 468–488, and 515–535; these read LELT…FWLL, LLGN…GLFF, LGGC…YWVL, WMLW…PIIM, and PIIF…YWVV.

This sequence belongs to the OXA1/ALB3/YidC family. Type 1 subfamily. In terms of assembly, interacts with the Sec translocase complex via SecD. Specifically interacts with transmembrane segments of nascent integral membrane proteins during membrane integration.

It is found in the cell inner membrane. In terms of biological role, required for the insertion and/or proper folding and/or complex formation of integral membrane proteins into the membrane. Involved in integration of membrane proteins that insert both dependently and independently of the Sec translocase complex, as well as at least some lipoproteins. Aids folding of multispanning membrane proteins. In Pseudomonas putida (strain GB-1), this protein is Membrane protein insertase YidC.